The following is a 436-amino-acid chain: MAKIVKVIGREIIDSRGNPTVEAEVHLEGGFVGLAAAPSGASTGSREALELRDGDKARFLGKGVLKAVSAVNNEIAHAIVGKDASNQAEIDQIMIDLDGTDNKSKFGANAILAVSLANAKAAAASKGLPLYAHIAELNGTPGVYSMPLPMMNIINGGEHADNNVDIQEFMIQPVGASTLKEALRIGAEVFHNLAKVLKAKGLNTAVGDEGGFAPNLASNADALACIKEAVEKAGYVLGKDVTLAMDCASSEFYNKDNGLYEMKGEGKSFTSQEFTHYLEGLCKEYPIVSIEDGQDESDWEGFAYQTKVLGDKVQLVGDDLFVTNTKILSRGIENGIANSILIKFNQIGSLTETLAAIKMAKDAGYTAVISHRSGETEDATIADLAVGTAAGQIKTGSMSRSDRVAKYNQLIRIEEALAAAGTPAPFNGRKEVKGQA.

Residue glutamine 167 coordinates (2R)-2-phosphoglycerate. Glutamate 209 (proton donor) is an active-site residue. 3 residues coordinate Mg(2+): aspartate 246, glutamate 291, and aspartate 318. (2R)-2-phosphoglycerate contacts are provided by lysine 343, arginine 372, serine 373, and lysine 394. Lysine 343 functions as the Proton acceptor in the catalytic mechanism.

It belongs to the enolase family. Component of the RNA degradosome, a multiprotein complex involved in RNA processing and mRNA degradation. Requires Mg(2+) as cofactor.

The protein resides in the cytoplasm. It localises to the secreted. The protein localises to the cell surface. It catalyses the reaction (2R)-2-phosphoglycerate = phosphoenolpyruvate + H2O. It functions in the pathway carbohydrate degradation; glycolysis; pyruvate from D-glyceraldehyde 3-phosphate: step 4/5. Catalyzes the reversible conversion of 2-phosphoglycerate (2-PG) into phosphoenolpyruvate (PEP). It is essential for the degradation of carbohydrates via glycolysis. This is Enolase from Glaesserella parasuis serovar 5 (strain SH0165) (Haemophilus parasuis).